The primary structure comprises 329 residues: Ribosomal protein L11 methyltransferase (329 aa).

S-adenosyl-L-methionine-binding residues include T177, G198, D220, and N264.

It belongs to the methyltransferase superfamily. PrmA family.

It is found in the cytoplasm. The catalysed reaction is L-lysyl-[protein] + 3 S-adenosyl-L-methionine = N(6),N(6),N(6)-trimethyl-L-lysyl-[protein] + 3 S-adenosyl-L-homocysteine + 3 H(+). Methylates ribosomal protein L11. In Helicobacter pylori (strain J99 / ATCC 700824) (Campylobacter pylori J99), this protein is Ribosomal protein L11 methyltransferase.